The primary structure comprises 341 residues: Foldase protein PrsA (341 aa).

An N-terminal signal peptide occupies residues 1–22 (MKNIGRLAVTALIAVFIFSVTG). Cys23 carries the N-palmitoyl cysteine lipid modification. Cys23 carries S-diacylglycerol cysteine lipidation. A PpiC domain is found at 199–291 (PNKMHLAHIL…FGYHIIKCIK (93 aa)).

Belongs to the PrsA family.

It is found in the cell membrane. It catalyses the reaction [protein]-peptidylproline (omega=180) = [protein]-peptidylproline (omega=0). In terms of biological role, plays a major role in protein secretion by helping the post-translocational extracellular folding of several secreted proteins. The sequence is that of Foldase protein PrsA from Clostridium kluyveri (strain NBRC 12016).